The chain runs to 295 residues: Lipase 2 (295 aa).

The signal sequence occupies residues 1-31; the sequence is MPKPALRRVMTATVAAVGTLALGLTDATAHA. The active-site Nucleophile is the S48. 3 disulfides stabilise this stretch: C65-C89, C138-C152, and C205-C254. The active site involves H275.

This sequence belongs to the 'GDSL' lipolytic enzyme family. As to quaternary structure, monomer.

The protein localises to the secreted. The enzyme catalyses a triacylglycerol + H2O = a diacylglycerol + a fatty acid + H(+). With respect to regulation, strongly inhibited by Ag(+). The cations Ca(2+) and Mg(2+) do not significantly reduce the lipolytic activity of SCO7513, whereas high concentrations of Co(2+) and Cu(2+) partially inhibit it. Is not inhibited by DTT in vitro. Is resistant to PMSF inhibition, except in the presence of Ca(2+). Functionally, catalyzes the hydrolysis of fatty acid esters with a preference for long chain fatty acids (C16-C18). The protein is Lipase 2 of Streptomyces coelicolor (strain ATCC BAA-471 / A3(2) / M145).